A 121-amino-acid chain; its full sequence is NADH-quinone oxidoreductase subunit A 1 (121 aa).

3 helical membrane passes run 11–31 (IAIFIGIALVIGLALLVAPFA), 65–85 (LVSILFIIFDLEVAFLFPWAV), and 90–110 (MGWFGFWSMMVFLLVLTVGFI).

Belongs to the complex I subunit 3 family. In terms of assembly, NDH-1 is composed of 14 different subunits. Subunits NuoA, H, J, K, L, M, N constitute the membrane sector of the complex.

The protein resides in the cell inner membrane. It carries out the reaction a quinone + NADH + 5 H(+)(in) = a quinol + NAD(+) + 4 H(+)(out). Its function is as follows. NDH-1 shuttles electrons from NADH, via FMN and iron-sulfur (Fe-S) centers, to quinones in the respiratory chain. The immediate electron acceptor for the enzyme in this species is believed to be ubiquinone. Couples the redox reaction to proton translocation (for every two electrons transferred, four hydrogen ions are translocated across the cytoplasmic membrane), and thus conserves the redox energy in a proton gradient. The polypeptide is NADH-quinone oxidoreductase subunit A 1 (Rhizobium meliloti (strain 1021) (Ensifer meliloti)).